The sequence spans 163 residues: Large ribosomal subunit protein uL13m (163 aa).

N-acetylserine is present on Ser2. Positions 2–4 (SQK) are excised as a propeptide.

This sequence belongs to the universal ribosomal protein uL13 family. Component of the mitochondrial large ribosomal subunit (mt-LSU). Mature yeast 74S mitochondrial ribosomes consist of a small (37S) and a large (54S) subunit. The 37S small subunit contains a 15S ribosomal RNA (15S mt-rRNA) and 34 different proteins. The 54S large subunit contains a 21S rRNA (21S mt-rRNA) and 46 different proteins.

The protein resides in the mitochondrion. Component of the mitochondrial ribosome (mitoribosome), a dedicated translation machinery responsible for the synthesis of mitochondrial genome-encoded proteins, including at least some of the essential transmembrane subunits of the mitochondrial respiratory chain. The mitoribosomes are attached to the mitochondrial inner membrane and translation products are cotranslationally integrated into the membrane. The polypeptide is Large ribosomal subunit protein uL13m (MRPL23) (Saccharomyces cerevisiae (strain ATCC 204508 / S288c) (Baker's yeast)).